The primary structure comprises 634 residues: CRISPR-associated protein MJ1674 (634 aa).

Functionally, CRISPR (clustered regularly interspaced short palindromic repeat) is an adaptive immune system that provides protection against mobile genetic elements (viruses, transposable elements and conjugative plasmids). CRISPR clusters contain spacers, sequences complementary to antecedent mobile elements, and target invading nucleic acids. CRISPR clusters are transcribed and processed into CRISPR RNA (crRNA). The type III Csm effector complex binds crRNA and acts as a crRNA-guided RNase, DNase and cyclic oligoadenylate synthase; binding of target RNA cognate to the crRNA is required for all activities. The protein is CRISPR-associated protein MJ1674 of Methanocaldococcus jannaschii (strain ATCC 43067 / DSM 2661 / JAL-1 / JCM 10045 / NBRC 100440) (Methanococcus jannaschii).